Consider the following 203-residue polypeptide: Mitotic spindle assembly checkpoint protein MAD2A (203 aa).

In terms of domain architecture, HORMA spans 14–196; that stretch reads KGSTEIVTEF…TTIHKVESMV (183 aa). Positions 194 to 203 are required for assuming the closed conformation and for interaction with cdc20; the sequence is SMVAYKISND.

It belongs to the MAD2 family. In terms of assembly, interacts with cdc20.

The protein resides in the nucleus. The protein localises to the chromosome. It is found in the centromere. Its subcellular location is the kinetochore. It localises to the cytoplasm. In terms of biological role, component of the spindle-assembly checkpoint that prevents the onset of anaphase until all chromosomes are properly aligned at the metaphase plate. Required for the execution of the mitotic checkpoint which monitors the process of kinetochore-spindle attachment and inhibits the activity of the anaphase promoting complex until all chromosomes are aligned at the metaphase plate. The chain is Mitotic spindle assembly checkpoint protein MAD2A (mad2l1-1) from Dictyostelium discoideum (Social amoeba).